Reading from the N-terminus, the 361-residue chain is Phospho-N-acetylmuramoyl-pentapeptide-transferase (361 aa).

10 consecutive transmembrane segments (helical) span residues 25–45 (RTVL…PAMI), 73–93 (TMGG…WADL), 97–117 (YVWI…VDDY), 134–154 (LFWQ…TAEL), 168–188 (VAVP…IVGT), 200–220 (GLAI…SYVA), 237–257 (AGEL…FLWF), 264–284 (VFMG…VTVI), 289–309 (IVML…MLQV), and 338–358 (QVVV…LSSL).

The protein belongs to the glycosyltransferase 4 family. MraY subfamily. Requires Mg(2+) as cofactor.

The protein resides in the cell inner membrane. The catalysed reaction is UDP-N-acetyl-alpha-D-muramoyl-L-alanyl-gamma-D-glutamyl-meso-2,6-diaminopimeloyl-D-alanyl-D-alanine + di-trans,octa-cis-undecaprenyl phosphate = di-trans,octa-cis-undecaprenyl diphospho-N-acetyl-alpha-D-muramoyl-L-alanyl-D-glutamyl-meso-2,6-diaminopimeloyl-D-alanyl-D-alanine + UMP. The protein operates within cell wall biogenesis; peptidoglycan biosynthesis. Its function is as follows. Catalyzes the initial step of the lipid cycle reactions in the biosynthesis of the cell wall peptidoglycan: transfers peptidoglycan precursor phospho-MurNAc-pentapeptide from UDP-MurNAc-pentapeptide onto the lipid carrier undecaprenyl phosphate, yielding undecaprenyl-pyrophosphoryl-MurNAc-pentapeptide, known as lipid I. The sequence is that of Phospho-N-acetylmuramoyl-pentapeptide-transferase from Nitrosospira multiformis (strain ATCC 25196 / NCIMB 11849 / C 71).